Reading from the N-terminus, the 225-residue chain is PKHD-type hydroxylase YbiX (225 aa).

Residues 78–177 (TLSTPLFNRY…RVASFMWIQS (100 aa)) form the Fe2OG dioxygenase domain. Residues His-96, Asp-98, and His-158 each coordinate Fe cation. Residue Arg-168 participates in 2-oxoglutarate binding.

It depends on Fe(2+) as a cofactor. Requires L-ascorbate as cofactor.

This is PKHD-type hydroxylase YbiX from Escherichia coli O6:H1 (strain CFT073 / ATCC 700928 / UPEC).